A 931-amino-acid chain; its full sequence is Envelope glycoprotein B (931 aa).

A signal peptide spans 1-71 (MSPCGYYSKW…FSMFVTAVVS (71 aa)). Residues 72 to 786 (VSPSSFYESL…HGFTTFLSNP (715 aa)) are Virion surface-facing. Cystine bridges form between C122–C584, C139–C540, C213–C277, C369–C417, and C608–C645. The N-linked (GlcNAc...) asparagine; by host glycan is linked to N147. Residues 179-185 (AWAGSSY) form an involved in fusion and/or binding to host membrane region. N257 carries N-linked (GlcNAc...) asparagine; by host glycosylation. The interval 264-271 (GTPGTYRT) is involved in fusion and/or binding to host membrane. 4 N-linked (GlcNAc...) asparagine; by host glycosylation sites follow: N435, N503, N620, and N686. 2 hydrophobic membrane proximal region regions span residues 731–784 (IDKV…TFLS) and 764–784 (VVLGATGALLSTVHGFTTFLS). Residues 787 to 807 (FGALAVGLLVLAGLVAAFFAY) form a helical membrane-spanning segment. Over 808–931 (RYVLKLKTSP…RVRTENVTGV (124 aa)) the chain is Intravirion. A Golgi targeting motif is present at residues 881-884 (YMTL). The short motif at 904–906 (LLT) is the Di-leucine internalization motif element. An Internalization motif motif is present at residues 920-923 (YSRV).

The protein belongs to the herpesviridae glycoprotein B family. In terms of assembly, homotrimer; disulfide-linked. Binds to heparan sulfate proteoglycans. Interacts with gH/gL heterodimer. Interacts with gE. A proteolytic cleavage by host furin generates two subunits that remain linked by disulfide bonds.

It localises to the virion membrane. It is found in the host cell membrane. The protein localises to the host endosome membrane. The protein resides in the host Golgi apparatus membrane. In terms of biological role, envelope glycoprotein that forms spikes at the surface of virion envelope. Essential for the initial attachment to heparan sulfate moieties of the host cell surface proteoglycans. Involved in fusion of viral and cellular membranes leading to virus entry into the host cell. Following initial binding to its host receptors, membrane fusion is mediated by the fusion machinery composed at least of gB and the heterodimer gH/gL. May be involved in the fusion between the virion envelope and the outer nuclear membrane during virion egress. This chain is Envelope glycoprotein B, found in Varicella-zoster virus (strain Dumas) (HHV-3).